The chain runs to 86 residues: Beta-mammal/insect toxin To1 (86 aa).

The first 20 residues, 1 to 20, serve as a signal peptide directing secretion; that stretch reads MTRFVLFISCFFLIDMIVEC. One can recognise an LCN-type CS-alpha/beta domain in the interval 22–84; the sequence is KEGYLVGNDG…TWSSATNKCK (63 aa). 4 disulfide bridges follow: Cys32-Cys83, Cys36-Cys58, Cys44-Cys64, and Cys48-Cys66. Position 84 is a lysine amide (Lys84).

The protein belongs to the long (4 C-C) scorpion toxin superfamily. Sodium channel inhibitor family. Beta subfamily. Expressed by the venom gland.

It localises to the secreted. Its function is as follows. Beta toxin that show multiple effects. It enhances the open probability at more negative potentials of human Nav1.3/SCN3A and Nav1.6/SCN8A, of the insect channel BgNaV1 and of arachnid VdNaV1 channel. It promotes an important shift in slow inactivation processes as a function of the prepulse voltage in human Nav1.3/SCN3A and Nav1.6/SCN8A and a small shift in Nav1.1/SCN1A, Nav1.2/SCN2A and Nav1.4/SCN4A. Finally, it reduces the peak of sodium currents in Nav1.3/SCN3A (80% inhibition at 70 nM of toxin), Nav1.6/SCN8A (55.3%), Nav1.1/SCN1A (53.3%), Nav1.5/SCN5A (46.7%), Nav1.2/SCN2A (42.7%) and Nav1.4/SCN4A (20%) voltage-gated sodium channels. It has also been shown to affect the sodium current permeability of rat cerebellum granular cells in a partially reversible manner. In vivo, an intraperitoneal injection (20 ug) into mice produces excitability, respiratory problems, convulsions and death, within the first 30 minutes after injection. This Tityus obscurus (Amazonian scorpion) protein is Beta-mammal/insect toxin To1.